The following is a 238-amino-acid chain: Ankyrin repeat domain-containing protein 49 (238 aa).

Residues 38–57 (TGTQSLWVGNSDEDEEQEEK) are disordered. The residue at position 48 (serine 48) is a Phosphoserine. A compositionally biased stretch (acidic residues) spans 48-57 (SDEDEEQEEK). ANK repeat units lie at residues 72–105 (DPSK…TRDE), 106–135 (DEYT…DVHA), 139–168 (DGWT…DINA), and 172–205 (GLLT…ELKN).

In terms of tissue distribution, expressed in spermatogonia, spermatocytes and round spermatids.

It is found in the nucleus. May have a role in spermatogenesis where it promotes autophagy in response to serum starvation, via the NF-kappaB pathway. This Mus musculus (Mouse) protein is Ankyrin repeat domain-containing protein 49 (Ankrd49).